The chain runs to 618 residues: Citrolysin protein 1 (618 aa).

Functionally, bacterial hemolysins are exotoxins that attack blood cell membranes and cause cell rupture by mechanisms not clearly defined. The sequence is that of Citrolysin protein 1 from Citrobacter freundii.